Here is a 208-residue protein sequence, read N- to C-terminus: Probable molybdenum cofactor guanylyltransferase (208 aa).

GTP contacts are provided by residues 12-14, Lys24, Asp72, and Asp101; that span reads IAG. Asp101 serves as a coordination point for Mg(2+).

Belongs to the MobA family. It depends on Mg(2+) as a cofactor.

It is found in the cytoplasm. The catalysed reaction is Mo-molybdopterin + GTP + H(+) = Mo-molybdopterin guanine dinucleotide + diphosphate. Transfers a GMP moiety from GTP to Mo-molybdopterin (Mo-MPT) cofactor (Moco or molybdenum cofactor) to form Mo-molybdopterin guanine dinucleotide (Mo-MGD) cofactor. This is Probable molybdenum cofactor guanylyltransferase from Chloroflexus aggregans (strain MD-66 / DSM 9485).